Reading from the N-terminus, the 269-residue chain is Expansin-B9 (269 aa).

Positions 1–24 (MGSLTTNIVLAVAVVAALVGGGSC) are cleaved as a signal peptide. Asn34 is a glycosylation site (N-linked (GlcNAc...) asparagine). The 107-residue stretch at 63–169 (GGACGIKNVN…RRVRCKYPGG (107 aa)) folds into the Expansin-like EG45 domain. 3 disulfide bridges follow: Cys66/Cys94, Cys97/Cys164, and Cys102/Cys108. The 82-residue stretch at 183 to 264 (NYLAVLVKFV…NWMPDAIYVS (82 aa)) folds into the Expansin-like CBD domain.

This sequence belongs to the expansin family. Expansin B subfamily.

The protein resides in the secreted. Its subcellular location is the cell wall. It is found in the membrane. In terms of biological role, may cause loosening and extension of plant cell walls by disrupting non-covalent bonding between cellulose microfibrils and matrix glucans. No enzymatic activity has been found. May be required for rapid internodal elongation in deepwater rice during submergence. The chain is Expansin-B9 (EXPB9) from Oryza sativa subsp. japonica (Rice).